The sequence spans 145 residues: Ribonuclease H (145 aa).

In terms of domain architecture, RNase H type-1 spans 1–141; it reads MQEVTIYSDG…ADALANRGVE (141 aa). Mg(2+)-binding residues include Asp9, Glu47, Asp69, and Asp133.

It belongs to the RNase H family. In terms of assembly, monomer. It depends on Mg(2+) as a cofactor.

Its subcellular location is the cytoplasm. It catalyses the reaction Endonucleolytic cleavage to 5'-phosphomonoester.. Its function is as follows. Endonuclease that specifically degrades the RNA of RNA-DNA hybrids. The polypeptide is Ribonuclease H (Cupriavidus necator (strain ATCC 17699 / DSM 428 / KCTC 22496 / NCIMB 10442 / H16 / Stanier 337) (Ralstonia eutropha)).